The following is a 586-amino-acid chain: Phosphomethylpyrimidine synthase (586 aa).

Disordered stretches follow at residues 38–59 and 92–114; these read IELS…TSGP and GREI…VFPQ. Over residues 92–102 the composition is skewed to basic and acidic residues; sequence GREIKPEDDGV. Residues N193, M222, Y251, H287, 307–309, 348–351, and E387 contribute to the substrate site; these read SRG and DGLR. H391 is a Zn(2+) binding site. A substrate-binding site is contributed by Y414. Residue H455 participates in Zn(2+) binding. Residues C535, C538, and C543 each contribute to the [4Fe-4S] cluster site.

Belongs to the ThiC family. Requires [4Fe-4S] cluster as cofactor.

It carries out the reaction 5-amino-1-(5-phospho-beta-D-ribosyl)imidazole + S-adenosyl-L-methionine = 4-amino-2-methyl-5-(phosphooxymethyl)pyrimidine + CO + 5'-deoxyadenosine + formate + L-methionine + 3 H(+). It participates in cofactor biosynthesis; thiamine diphosphate biosynthesis. Functionally, catalyzes the synthesis of the hydroxymethylpyrimidine phosphate (HMP-P) moiety of thiamine from aminoimidazole ribotide (AIR) in a radical S-adenosyl-L-methionine (SAM)-dependent reaction. This chain is Phosphomethylpyrimidine synthase, found in Bacillus cytotoxicus (strain DSM 22905 / CIP 110041 / 391-98 / NVH 391-98).